A 216-amino-acid polypeptide reads, in one-letter code: N-acetyltransferase 9-like protein (216 aa).

An N-acetyltransferase domain is found at 68–215 (VLLNENDEAK…DHVELELMRT (148 aa)).

It belongs to the acetyltransferase family. GNAT subfamily.

It is found in the cytoplasm. The protein resides in the nucleus. This is N-acetyltransferase 9-like protein from Schizosaccharomyces pombe (strain 972 / ATCC 24843) (Fission yeast).